The primary structure comprises 174 residues: Glycine-rich protein 5 (174 aa).

The first 22 residues, 1-22, serve as a signal peptide directing secretion; it reads MASKSLFLVALLVGSFAFTSFA.

As to expression, mostly expressed in immature seed pods, and, to a lower extent, in stems and leaves. Present in phloem and epiderm in leaves, stems, flowers and fruits.

It localises to the vacuole. Involved in organ growth by promoting cell elongation processes. This chain is Glycine-rich protein 5, found in Arabidopsis thaliana (Mouse-ear cress).